We begin with the raw amino-acid sequence, 165 residues long: Pyruvoyl-dependent arginine decarboxylase (165 aa).

Serine 53 bears the Pyruvic acid (Ser) mark.

It belongs to the PdaD family. Pyruvate is required as a cofactor.

It catalyses the reaction L-arginine + H(+) = agmatine + CO2. The polypeptide is Pyruvoyl-dependent arginine decarboxylase (Methanococcus aeolicus (strain ATCC BAA-1280 / DSM 17508 / OCM 812 / Nankai-3)).